A 374-amino-acid chain; its full sequence is Chaperone protein DnaJ (374 aa).

The region spanning 5 to 70 (DFYEILGLGK…QKRDAYDRYG (66 aa)) is the J domain. Positions 28–47 (LAMKHHPDRNPDSKGAEDKF) are disordered. Residues 35–47 (DRNPDSKGAEDKF) show a composition bias toward basic and acidic residues. The segment at 134 to 212 (GYDTTIRVPS…CSGAGKIKRN (79 aa)) adopts a CR-type zinc-finger fold. Zn(2+) contacts are provided by Cys147, Cys150, Cys164, Cys167, Cys186, Cys189, Cys200, and Cys203. CXXCXGXG motif repeat units follow at residues 147–154 (CETCDGSG), 164–171 (CTTCGGHG), 186–193 (CPKCHGSG), and 200–207 (CTACSGAG).

Belongs to the DnaJ family. In terms of assembly, homodimer. Zn(2+) is required as a cofactor.

The protein localises to the cytoplasm. In terms of biological role, participates actively in the response to hyperosmotic and heat shock by preventing the aggregation of stress-denatured proteins and by disaggregating proteins, also in an autonomous, DnaK-independent fashion. Unfolded proteins bind initially to DnaJ; upon interaction with the DnaJ-bound protein, DnaK hydrolyzes its bound ATP, resulting in the formation of a stable complex. GrpE releases ADP from DnaK; ATP binding to DnaK triggers the release of the substrate protein, thus completing the reaction cycle. Several rounds of ATP-dependent interactions between DnaJ, DnaK and GrpE are required for fully efficient folding. Also involved, together with DnaK and GrpE, in the DNA replication of plasmids through activation of initiation proteins. The sequence is that of Chaperone protein DnaJ from Herminiimonas arsenicoxydans.